A 429-amino-acid chain; its full sequence is Ribosomal RNA small subunit methyltransferase B (429 aa).

Residues 254–260 (CAAPGGK), Asp277, Asp303, and Asp322 each bind S-adenosyl-L-methionine. Cys375 serves as the catalytic Nucleophile.

The protein belongs to the class I-like SAM-binding methyltransferase superfamily. RsmB/NOP family.

The protein localises to the cytoplasm. The catalysed reaction is cytidine(967) in 16S rRNA + S-adenosyl-L-methionine = 5-methylcytidine(967) in 16S rRNA + S-adenosyl-L-homocysteine + H(+). Its function is as follows. Specifically methylates the cytosine at position 967 (m5C967) of 16S rRNA. The sequence is that of Ribosomal RNA small subunit methyltransferase B from Photorhabdus laumondii subsp. laumondii (strain DSM 15139 / CIP 105565 / TT01) (Photorhabdus luminescens subsp. laumondii).